We begin with the raw amino-acid sequence, 1937 residues long: Collagen-like protein 7 (1937 aa).

N-linked (GlcNAc...) asparagine; by host glycans are attached at residues N6 and N21. Disordered stretches follow at residues 88–248 (CKGN…KGDK), 294–531 (NLKG…PDLG), 583–643 (LKGD…NQGV), and 670–1144 (IKGD…DTAT). Collagen-like domains follow at residues 102–161 (GPKG…KGEK), 168–227 (GEKG…KGDI), 297–356 (GEKG…KGEK), 363–422 (GDKG…IGEK), and 453–512 (GDKG…KGDK). The segment covering 296–514 (KGEKGDKGNK…DKGDKGDKGD (219 aa)) has biased composition (basic and acidic residues). N-linked (GlcNAc...) asparagine; by host glycosylation occurs at N515. 3 stretches are compositionally biased toward basic and acidic residues: residues 584–605 (KGDK…KGDK), 614–625 (KGEKGDKGDKGD), and 670–899 (IKGD…KGDK). 5 consecutive Collagen-like domains span residues 672–731 (GDKG…KGDK), 735–854 (GNKG…KGNI), 867–926 (GLKG…KGDK), 936–995 (GIKG…KGDK), and 1023–1142 (GSKG…KGDT). Residue N902 is glycosylated (N-linked (GlcNAc...) asparagine; by host). A compositionally biased stretch (basic and acidic residues) spans 907 to 1141 (YKGDKGDKGS…DKGDKGDKGD (235 aa)). N-linked (GlcNAc...) asparagine; by host glycosylation is found at N1178, N1192, N1212, N1217, N1245, N1246, N1255, N1317, N1422, N1427, N1432, N1443, N1452, N1477, N1494, N1506, N1513, N1533, N1598, N1619, N1620, N1632, N1641, N1663, N1664, N1672, N1682, N1683, N1732, N1735, N1746, N1756, N1784, N1842, and N1934.

Post-translationally, may be hydroxylated on lysine by the viral-encoded procollagen-lysine,2-oxoglutarate 5-dioxygenase.

Its subcellular location is the virion. In terms of biological role, may participate in the formation of a layer of cross-linked glycosylated fibrils at the viral surface thus giving it a hairy-like appearance. The polypeptide is Collagen-like protein 7 (Acanthamoeba polyphaga mimivirus (APMV)).